Reading from the N-terminus, the 88-residue chain is Small ribosomal subunit protein uS15 (88 aa).

This sequence belongs to the universal ribosomal protein uS15 family. Part of the 30S ribosomal subunit. Forms a bridge to the 50S subunit in the 70S ribosome, contacting the 23S rRNA.

Functionally, one of the primary rRNA binding proteins, it binds directly to 16S rRNA where it helps nucleate assembly of the platform of the 30S subunit by binding and bridging several RNA helices of the 16S rRNA. In terms of biological role, forms an intersubunit bridge (bridge B4) with the 23S rRNA of the 50S subunit in the ribosome. This Psychrobacter cryohalolentis (strain ATCC BAA-1226 / DSM 17306 / VKM B-2378 / K5) protein is Small ribosomal subunit protein uS15.